The primary structure comprises 123 residues: Ribonuclease P protein component (123 aa).

This sequence belongs to the RnpA family. As to quaternary structure, consists of a catalytic RNA component (M1 or rnpB) and a protein subunit.

It catalyses the reaction Endonucleolytic cleavage of RNA, removing 5'-extranucleotides from tRNA precursor.. Functionally, RNaseP catalyzes the removal of the 5'-leader sequence from pre-tRNA to produce the mature 5'-terminus. It can also cleave other RNA substrates such as 4.5S RNA. The protein component plays an auxiliary but essential role in vivo by binding to the 5'-leader sequence and broadening the substrate specificity of the ribozyme. In Bordetella bronchiseptica (strain ATCC BAA-588 / NCTC 13252 / RB50) (Alcaligenes bronchisepticus), this protein is Ribonuclease P protein component.